The primary structure comprises 247 residues: Small ribosomal subunit protein uS2 (247 aa).

The protein belongs to the universal ribosomal protein uS2 family.

This Pseudomonas savastanoi pv. phaseolicola (strain 1448A / Race 6) (Pseudomonas syringae pv. phaseolicola (strain 1448A / Race 6)) protein is Small ribosomal subunit protein uS2.